Consider the following 111-residue polypeptide: Ig kappa chain V-III region CBPC 101 (111 aa).

The framework-1 stretch occupies residues 1–23; the sequence is DIVLTQSPASLAVSLGQRATISC. Residues Cys23 and Cys92 are joined by a disulfide bond. Positions 24 to 38 are complementarity-determining-1; that stretch reads KASQSVDYTGESYMN. The framework-2 stretch occupies residues 39 to 53; sequence WYQQNPGQSPKLLIY. The interval 54–60 is complementarity-determining-2; that stretch reads AASNLES. The interval 61-92 is framework-3; the sequence is GIPARFSGSGSGTDFTLNIHPVEEEDAATYYC. A complementarity-determining-3 region spans residues 93–101; sequence QQSNEDPYT. Residues 102 to 111 form a framework-4 region; the sequence is FGGGTKLEIK.

This Mus musculus (Mouse) protein is Ig kappa chain V-III region CBPC 101.